Reading from the N-terminus, the 158-residue chain is Large ribosomal subunit protein uL11 (158 aa).

Positions 1–21 are disordered; sequence MAQSVKTMVEGGKATTGPPIG.

Belongs to the universal ribosomal protein uL11 family. In terms of assembly, part of the ribosomal stalk of the 50S ribosomal subunit. Interacts with L10 and the large rRNA to form the base of the stalk. L10 forms an elongated spine to which L12 dimers bind in a sequential fashion forming a multimeric L10(L12)X complex.

Forms part of the ribosomal stalk which helps the ribosome interact with GTP-bound translation factors. In Thermoplasma volcanium (strain ATCC 51530 / DSM 4299 / JCM 9571 / NBRC 15438 / GSS1), this protein is Large ribosomal subunit protein uL11.